Reading from the N-terminus, the 158-residue chain is Phosphopantetheine adenylyltransferase (158 aa).

T10 is a substrate binding site. Residues 10–11 and H18 contribute to the ATP site; that span reads TF. Substrate is bound by residues K42, L74, and R88. Residues 89 to 91, E99, and 124 to 130 contribute to the ATP site; these read GLR and NSFISST.

It belongs to the bacterial CoaD family. As to quaternary structure, homohexamer. It depends on Mg(2+) as a cofactor.

It localises to the cytoplasm. The catalysed reaction is (R)-4'-phosphopantetheine + ATP + H(+) = 3'-dephospho-CoA + diphosphate. It participates in cofactor biosynthesis; coenzyme A biosynthesis; CoA from (R)-pantothenate: step 4/5. Its function is as follows. Reversibly transfers an adenylyl group from ATP to 4'-phosphopantetheine, yielding dephospho-CoA (dPCoA) and pyrophosphate. This chain is Phosphopantetheine adenylyltransferase, found in Shewanella woodyi (strain ATCC 51908 / MS32).